A 249-amino-acid polypeptide reads, in one-letter code: Chromosome-partitioning ATPase Soj (249 aa).

The ATP site is built by lysine 15, glycine 16, glycine 17, valine 18, glycine 19, lysine 20, threonine 21, threonine 22, proline 207, and asparagine 209. Glycine 17 contacts ADP. Residues glycine 19, lysine 20, threonine 21, threonine 22, proline 207, and asparagine 209 each coordinate ADP. Threonine 21 serves as a coordination point for Mg(2+).

The protein belongs to the ParA family. In terms of assembly, monomer in the absence of nucleotides or presence of ADP, in the presence of ATP is found in a monomer-dimer equilibrium. ATP-binding is required for DNA-binding. Probably interacts with Spo0J.

The catalysed reaction is ATP + H2O = ADP + phosphate + H(+). With respect to regulation, ATPase activity is stimulated 10-fold in the presence of Spo0J and parS DNA (a plasmid centromere-like site or plasmid DNA itself). The first 20 residues of Spo0J stimulate its ATPase activity by 8%. Its function is as follows. ATPase probably involved in chromosome partitioning. Cooperatively binds dsDNA, forming nucleoprotein filaments in a strictly ATP-dependent fashion. Can also bind ssDNA with lower affinity. The protein is Chromosome-partitioning ATPase Soj of Thermus thermophilus (strain ATCC BAA-163 / DSM 7039 / HB27).